Consider the following 408-residue polypeptide: MNVEDIIEKVANGEIKLHQVEKYVNGDKRLATEIRRKALERKLGISLKHIGHYSIDPNELIGRNIENMIGVVQIPMGVAGPLKINGEYAKGEFYIPLATTEGALVASVNRGCSALTEAGGVVTTILDDKMTRAPLIRCPNARRAREVAEWVKENLNYLQEKAVAKVTRHGKLRDVKPFIVGNNLYLRFEFETGDAMGMNMVTIASEEIMKVIEEEFPDVRYLALSGNLCVDKKPNAVNFILGRGKTVVAEAIVPREIVEKKLKTTPELIAEVNYFKNLVGSAQAGSYGFNAHFGNIVGAIFLATGQDEAQITEGSHGITIAEVTPEGDLYISITMPSLEIGTVGGGTRVPTQREALSIMGVAGGGDPPGVNAKKFAEIVAGAVLAGELSLLAAIAAKHLARAHKMLGR.

Residues E101 and D307 each act as charge relay system in the active site. H403 acts as the Proton donor in catalysis.

The protein belongs to the HMG-CoA reductase family.

It carries out the reaction (R)-mevalonate + 2 NADP(+) + CoA = (3S)-3-hydroxy-3-methylglutaryl-CoA + 2 NADPH + 2 H(+). It participates in metabolic intermediate biosynthesis; (R)-mevalonate biosynthesis; (R)-mevalonate from acetyl-CoA: step 3/3. In terms of biological role, converts HMG-CoA to mevalonate. The chain is 3-hydroxy-3-methylglutaryl-coenzyme A reductase (hmgA) from Pyrococcus abyssi (strain GE5 / Orsay).